Consider the following 938-residue polypeptide: Isoleucine--tRNA ligase (938 aa).

Residues 58 to 68 (PYANGNIHIGH) carry the 'HIGH' region motif. Residue E562 participates in L-isoleucyl-5'-AMP binding. The short motif at 603 to 607 (KMSKS) is the 'KMSKS' region element. K606 provides a ligand contact to ATP. C901, C904, C921, and C924 together coordinate Zn(2+).

This sequence belongs to the class-I aminoacyl-tRNA synthetase family. IleS type 1 subfamily. Monomer. The cofactor is Zn(2+).

The protein resides in the cytoplasm. It carries out the reaction tRNA(Ile) + L-isoleucine + ATP = L-isoleucyl-tRNA(Ile) + AMP + diphosphate. In terms of biological role, catalyzes the attachment of isoleucine to tRNA(Ile). As IleRS can inadvertently accommodate and process structurally similar amino acids such as valine, to avoid such errors it has two additional distinct tRNA(Ile)-dependent editing activities. One activity is designated as 'pretransfer' editing and involves the hydrolysis of activated Val-AMP. The other activity is designated 'posttransfer' editing and involves deacylation of mischarged Val-tRNA(Ile). This chain is Isoleucine--tRNA ligase, found in Actinobacillus pleuropneumoniae serotype 7 (strain AP76).